A 125-amino-acid chain; its full sequence is UPF0102 protein Rpic_3463 (125 aa).

This sequence belongs to the UPF0102 family.

The polypeptide is UPF0102 protein Rpic_3463 (Ralstonia pickettii (strain 12J)).